Here is a 428-residue protein sequence, read N- to C-terminus: Enolase 1 (428 aa).

The segment at 38 to 58 is disordered; it reads EVPSGASTGENEAVELRDGGS. Gln163 lines the (2R)-2-phosphoglycerate pocket. Glu205 (proton donor) is an active-site residue. The Mg(2+) site is built by Asp242, Glu286, and Asp313. 4 residues coordinate (2R)-2-phosphoglycerate: Lys338, Arg367, Ser368, and Lys389. Residue Lys338 is the Proton acceptor of the active site.

It belongs to the enolase family. It depends on Mg(2+) as a cofactor.

The protein localises to the cytoplasm. The protein resides in the secreted. It localises to the cell surface. It catalyses the reaction (2R)-2-phosphoglycerate = phosphoenolpyruvate + H2O. It functions in the pathway carbohydrate degradation; glycolysis; pyruvate from D-glyceraldehyde 3-phosphate: step 4/5. Catalyzes the reversible conversion of 2-phosphoglycerate (2-PG) into phosphoenolpyruvate (PEP). It is essential for the degradation of carbohydrates via glycolysis. The chain is Enolase 1 from Lactobacillus gasseri (strain ATCC 33323 / DSM 20243 / BCRC 14619 / CIP 102991 / JCM 1131 / KCTC 3163 / NCIMB 11718 / NCTC 13722 / AM63).